Reading from the N-terminus, the 472-residue chain is Glutamine synthetase (472 aa).

The region spanning 17 to 101 (NNVKFVLLRF…IRCSVYEPTT (85 aa)) is the GS beta-grasp domain. One can recognise a GS catalytic domain in the interval 109 to 472 (PRSIAIRAEN…HPVEFEMYYA (364 aa)). Mg(2+) contacts are provided by E134 and E136. E212 lines the ATP pocket. 2 residues coordinate Mg(2+): E217 and E225. Residues 269–270 (NG) and G270 each bind L-glutamate. H274 contacts Mg(2+). Residues 276–278 (NMS) and S278 contribute to the ATP site. L-glutamate contacts are provided by R326, E332, and R344. Residues R344, R349, and K357 each contribute to the ATP site. Mg(2+) is bound at residue E362. L-glutamate is bound at residue R364. Y402 is subject to O-AMP-tyrosine.

This sequence belongs to the glutamine synthetase family. In terms of assembly, oligomer of 12 subunits arranged in the form of two hexameric ring. Mg(2+) serves as cofactor.

Its subcellular location is the cytoplasm. It carries out the reaction L-glutamate + NH4(+) + ATP = L-glutamine + ADP + phosphate + H(+). The activity of this enzyme could be controlled by adenylation under conditions of abundant glutamine. Functionally, catalyzes the ATP-dependent biosynthesis of glutamine from glutamate and ammonia. The chain is Glutamine synthetase from Haemophilus influenzae (strain ATCC 51907 / DSM 11121 / KW20 / Rd).